Reading from the N-terminus, the 91-residue chain is MSEPDVKSHKIEFPCDDYPIKVIGDTVVGFKDTVIEILSKHAKVDLSTLAERQSKEGKYTTVQLHIVAESENQLHDINSALRATGIVKMVL.

It belongs to the UPF0250 family.

The chain is UPF0250 protein PputGB1_4855 from Pseudomonas putida (strain GB-1).